The sequence spans 216 residues: Protein-L-isoaspartate O-methyltransferase (216 aa).

Residue serine 66 is part of the active site.

This sequence belongs to the methyltransferase superfamily. L-isoaspartyl/D-aspartyl protein methyltransferase family.

The protein localises to the cytoplasm. It carries out the reaction [protein]-L-isoaspartate + S-adenosyl-L-methionine = [protein]-L-isoaspartate alpha-methyl ester + S-adenosyl-L-homocysteine. Functionally, catalyzes the methyl esterification of L-isoaspartyl residues in peptides and proteins that result from spontaneous decomposition of normal L-aspartyl and L-asparaginyl residues. It plays a role in the repair and/or degradation of damaged proteins. This Dechloromonas aromatica (strain RCB) protein is Protein-L-isoaspartate O-methyltransferase.